We begin with the raw amino-acid sequence, 765 residues long: Dipeptidyl peptidase 4 (765 aa).

The Cytoplasmic portion of the chain corresponds to 1-6 (MKTPWK). The chain crosses the membrane as a helical; Signal-anchor for type II membrane protein span at residues 7–29 (VLLGLLGLAALITIITVPVVLLN). The Extracellular segment spans residues 30-765 (KGNDAAADSR…HFIKQCFSLP (736 aa)). Residues N84, N91, N149, N178, N228, N280, N320, N330, and N331 are each glycosylated (N-linked (GlcNAc...) asparagine). 3 disulfide bridges follow: C384–C393, C443–C446, and C453–C471. N-linked (GlcNAc...) asparagine glycosylation occurs at N519. Catalysis depends on S629, which acts as the Charge relay system. C648 and C761 are oxidised to a cystine. The N-linked (GlcNAc...) asparagine glycan is linked to N684. Residues D707 and H739 each act as charge relay system in the active site.

This sequence belongs to the peptidase S9B family. DPPIV subfamily. Monomer. Homodimer. Heterodimer with Seprase (FAP). Requires homodimerization for optimal dipeptidyl peptidase activity and T-cell costimulation. Found in a membrane raft complex, at least composed of BCL10, CARD11, DPP4 and IKBKB. Associates with collagen. Interacts with PTPRC; the interaction is enhanced in an interleukin-12-dependent manner in activated lymphocytes. Interacts (extracellular domain) with ADA; does not inhibit its dipeptidyl peptidase activity. Interacts with CAV1 (via the N-terminus); the interaction is direct. Interacts (via cytoplasmic tail) with CARD11 (via PDZ domain); its homodimerization is necessary for interaction with CARD11. Interacts with IGF2R; the interaction is direct. Interacts with GPC3. Post-translationally, the soluble form (Dipeptidyl peptidase 4 soluble form also named SDPP) derives from the membrane form (Dipeptidyl peptidase 4 membrane form also named MDPP) by proteolytic processing. N- and O-Glycosylated. In terms of processing, phosphorylated. Mannose 6-phosphate residues in the carbohydrate moiety are necessary for interaction with IGF2R in activated T-cells. Mannose 6-phosphorylation is induced during T-cell activation.

It localises to the secreted. The protein localises to the cell membrane. The protein resides in the apical cell membrane. Its subcellular location is the cell projection. It is found in the invadopodium membrane. It localises to the lamellipodium membrane. The protein localises to the cell junction. The protein resides in the membrane raft. It catalyses the reaction Release of an N-terminal dipeptide, Xaa-Yaa-|-Zaa-, from a polypeptide, preferentially when Yaa is Pro, provided Zaa is neither Pro nor hydroxyproline.. Inhibited by GPC3 and diprotin A. Cell surface glycoprotein receptor involved in the costimulatory signal essential for T-cell receptor (TCR)-mediated T-cell activation. Acts as a positive regulator of T-cell coactivation, by binding at least ADA, CAV1, IGF2R, and PTPRC. Its binding to CAV1 and CARD11 induces T-cell proliferation and NF-kappa-B activation in a T-cell receptor/CD3-dependent manner. Its interaction with ADA also regulates lymphocyte-epithelial cell adhesion. In association with FAP is involved in the pericellular proteolysis of the extracellular matrix (ECM), the migration and invasion of endothelial cells into the ECM. May be involved in the promotion of lymphatic endothelial cells adhesion, migration and tube formation. When overexpressed, enhanced cell proliferation, a process inhibited by GPC3. Also acts as a serine exopeptidase with a dipeptidyl peptidase activity that regulates various physiological processes by cleaving peptides in the circulation, including many chemokines, mitogenic growth factors, neuropeptides and peptide hormones. Removes N-terminal dipeptides sequentially from polypeptides having unsubstituted N-termini provided that the penultimate residue is proline. This is Dipeptidyl peptidase 4 (DPP4) from Felis catus (Cat).